A 340-amino-acid chain; its full sequence is Guanine nucleotide-binding protein G(I)/G(S)/G(T) subunit beta-1 (340 aa).

WD repeat units lie at residues 53–83 (GHLA…IIWD), 95–125 (LRSS…SIYN), 141–170 (GHTG…ALWD), 182–212 (GHTG…KLWD), 224–254 (GHES…RLFD), 268–298 (NIIC…NVWD), and 310–340 (GHDN…KIWN).

The protein belongs to the WD repeat G protein beta family. G proteins are composed of 3 units, alpha, beta and gamma.

Its function is as follows. Guanine nucleotide-binding proteins (G proteins) are involved as a modulator or transducer in various transmembrane signaling systems. The beta and gamma chains are required for the GTPase activity, for replacement of GDP by GTP, and for G protein-effector interaction. The chain is Guanine nucleotide-binding protein G(I)/G(S)/G(T) subunit beta-1 (gnb1) from Danio rerio (Zebrafish).